The sequence spans 313 residues: MSQEFAHLSVLLEETVGGLNIKDDGIYIDGTFGRGGHSRQILQRLGENGRLIAIDRDPQAIEAAKQFADDPRFQIVHGGFGQLADYVEELGLVGKIDGVLLDLGVSSPQLDDAERGFSFLRDGPLDMRMDNSQGETAAQWLARAEIEDMAWVFKTYGEEKNARHIARCIAADRDKTPFLRTKDLADLIARITKNKERNKHPATRVFQAIRIYINSELDQIDQALEGALTVLAPQGRLSIISFHSLEDRIVKRFIRRHSQGESVPHGLPITEDQINKSRKLRAIGKAIMPSDEEIERNARARSSVLRIAERLDY.

S-adenosyl-L-methionine-binding positions include G35–H37, D55, F80, D102, and Q109.

Belongs to the methyltransferase superfamily. RsmH family.

It localises to the cytoplasm. The enzyme catalyses cytidine(1402) in 16S rRNA + S-adenosyl-L-methionine = N(4)-methylcytidine(1402) in 16S rRNA + S-adenosyl-L-homocysteine + H(+). Specifically methylates the N4 position of cytidine in position 1402 (C1402) of 16S rRNA. In Shewanella sp. (strain MR-7), this protein is Ribosomal RNA small subunit methyltransferase H.